The sequence spans 138 residues: Cysteine desulfuration protein SufE (138 aa).

Cys51 functions as the Cysteine persulfide intermediate in the catalytic mechanism.

The protein belongs to the SufE family. As to quaternary structure, homodimer. Interacts with SufS.

It localises to the cytoplasm. Its pathway is cofactor biosynthesis; iron-sulfur cluster biosynthesis. Functionally, participates in cysteine desulfuration mediated by SufS. Cysteine desulfuration mobilizes sulfur from L-cysteine to yield L-alanine and constitutes an essential step in sulfur metabolism for biosynthesis of a variety of sulfur-containing biomolecules. Functions as a sulfur acceptor for SufS, by mediating the direct transfer of the sulfur atom from the S-sulfanylcysteine of SufS, an intermediate product of cysteine desulfuration process. In Escherichia fergusonii (strain ATCC 35469 / DSM 13698 / CCUG 18766 / IAM 14443 / JCM 21226 / LMG 7866 / NBRC 102419 / NCTC 12128 / CDC 0568-73), this protein is Cysteine desulfuration protein SufE.